Reading from the N-terminus, the 465-residue chain is ATP synthase subunit beta (465 aa).

ATP is bound at residue 149–156 (GGAGVGKT).

Belongs to the ATPase alpha/beta chains family. In terms of assembly, F-type ATPases have 2 components, CF(1) - the catalytic core - and CF(0) - the membrane proton channel. CF(1) has five subunits: alpha(3), beta(3), gamma(1), delta(1), epsilon(1). CF(0) has three main subunits: a(1), b(2) and c(9-12). The alpha and beta chains form an alternating ring which encloses part of the gamma chain. CF(1) is attached to CF(0) by a central stalk formed by the gamma and epsilon chains, while a peripheral stalk is formed by the delta and b chains.

Its subcellular location is the cell inner membrane. The enzyme catalyses ATP + H2O + 4 H(+)(in) = ADP + phosphate + 5 H(+)(out). Produces ATP from ADP in the presence of a proton gradient across the membrane. The catalytic sites are hosted primarily by the beta subunits. The protein is ATP synthase subunit beta of Dictyoglomus thermophilum (strain ATCC 35947 / DSM 3960 / H-6-12).